A 345-amino-acid polypeptide reads, in one-letter code: Beta-2-glycoprotein 1 (345 aa).

An N-terminal signal peptide occupies residues 1–19 (MVSPVLALFSAFLCHVAIA). 4 consecutive Sushi domains span residues 21–81 (RICP…RCVP), 82–139 (RVCP…ACAR), 140–202 (ITCP…ECLE), and 203–262 (VKCP…TCRE). 11 disulfides stabilise this stretch: C23/C66, C51/C79, C84/C124, C110/C137, C142/C188, C174/C200, C205/C248, C234/C260, C264/C315, C300/C325, and C307/C345. O-linked (GalNAc...) threonine glycosylation occurs at T33. N-linked (GlcNAc...) asparagine glycans are attached at residues N105, N117, N162, N183, and N193. The interval 263-345 (SCKLPVKKAT…KTDASELTPC (83 aa)) is sushi-like.

As to expression, expressed by the liver and secreted in plasma.

Its subcellular location is the secreted. Its function is as follows. Binds to various kinds of negatively charged substances such as heparin, phospholipids, and dextran sulfate. May prevent activation of the intrinsic blood coagulation cascade by binding to phospholipids on the surface of damaged cells. In Mus musculus (Mouse), this protein is Beta-2-glycoprotein 1 (Apoh).